The following is a 316-amino-acid chain: L-lactate dehydrogenase (316 aa).

NAD(+)-binding positions include Val15, Asp37, Lys42, Tyr68, and 82-83; that span reads GL. Residues Gln85, Arg91, and 123-126 each bind substrate; that span reads NPVD. NAD(+)-binding positions include 121 to 123 and Thr146; that span reads ASN. 151 to 154 is a binding site for substrate; sequence DTSR. The beta-D-fructose 1,6-bisphosphate site is built by Arg156 and His171. His178 serves as the catalytic Proton acceptor. Tyr222 is modified (phosphotyrosine). Thr231 is a binding site for substrate.

This sequence belongs to the LDH/MDH superfamily. LDH family. As to quaternary structure, homotetramer.

It localises to the cytoplasm. It catalyses the reaction (S)-lactate + NAD(+) = pyruvate + NADH + H(+). Its pathway is fermentation; pyruvate fermentation to lactate; (S)-lactate from pyruvate: step 1/1. Allosterically activated by fructose 1,6-bisphosphate (FBP). Catalyzes the conversion of lactate to pyruvate. This Borrelia turicatae (strain 91E135) protein is L-lactate dehydrogenase.